The following is a 318-amino-acid chain: Mitochondrial coenzyme A transporter SLC25A42 (318 aa).

3 Solcar repeats span residues 31 to 117, 129 to 214, and 224 to 312; these read RQVL…YKRI, LPPW…LKSL, and PYPF…MQIL. Helical transmembrane passes span 33 to 53, 89 to 109, 135 to 155, 186 to 206, 230 to 250, and 293 to 313; these read VLSS…AVAP, LWRG…IQFS, LLAG…LDLV, LYFG…LSFF, MVFG…LDVV, and LKGP…QILL.

This sequence belongs to the mitochondrial carrier (TC 2.A.29) family. Widely expressed. Highly expressed in adipose, followed by hypothalamus and brain coronal sections containing corpus callosum, fornix, thalamus, hypothalamus, optic chiasm, pons, midbrain, and cerebellum.

The protein localises to the mitochondrion inner membrane. It carries out the reaction ADP(out) + CoA(in) = ADP(in) + CoA(out). The catalysed reaction is 3'-dephospho-CoA(in) + ADP(out) = 3'-dephospho-CoA(out) + ADP(in). It catalyses the reaction adenosine 3',5'-bisphosphate(in) + ADP(out) = adenosine 3',5'-bisphosphate(out) + ADP(in). The enzyme catalyses AMP(in) + ADP(out) = AMP(out) + ADP(in). It carries out the reaction dADP(in) + ADP(out) = dADP(out) + ADP(in). The catalysed reaction is ADP(in) + ATP(out) = ADP(out) + ATP(in). Its function is as follows. Mitochondrial carrier mediating the transport of coenzyme A (CoA) in mitochondria in exchange for intramitochondrial (deoxy)adenine nucleotides and adenosine 3',5'-diphosphate. The sequence is that of Mitochondrial coenzyme A transporter SLC25A42 (Slc25a42) from Rattus norvegicus (Rat).